The following is a 580-amino-acid chain: MDYPKMDYFLDVESAHRLLDVESAQRFFYSQGAQARRATLLLPPTLMAASSEDDIDRRPIRRVRSKSDTPYLAEARISFNLGAAEEVERLAAMRSDSLVPGTHTPPIRRRSKFANLGRIFKPWKWRKKKSEKFKHTSAALERKISMRQSREELIKRGVLKEIYDKDGELSISNEDDSLTNGQSLSSSQLSLPALSEMEPVPMPRDPCSYEVLQASDIMDGPDPGAPVKLPCLPVKLSPPLPPKKVLICMPVGGPELSLASYAAQKSSQQAVAQHHHTVLPSQMQHQLQYGSHGQHLPSSTGTLPMHPSGCRMIDELNKTLAMTMQRLESSEQRVPCSTSYHSSGLHSSDGVTKAGPLGLPEIRQVPTVVIECDDNKENVPHEPDYEDSSCLYAREEEEEEEDEDDDASLYTSSLAMKVCRKDSLAIKLSNRPSKRELEEKNILPRQTDEERLELRQQIGTKLTRRLSQRPTAEELEQRNILKPRNEQEEQEEKREIKRRLTRKLSQRPTVEELRERKILIRFSDYVEVADAQDYDRRADKPWTRLTAADKAAIRKELNEFKSTEMEVHELSRHLTRFHRP.

Serine 67 and serine 78 each carry phosphoserine. Threonine 104 is subject to Phosphothreonine. The Nuclear localization signal signature appears at 108-129 (RRRSKFANLGRIFKPWKWRKKK). The stretch at 138–163 (AALERKISMRQSREELIKRGVLKEIY) is one RPEL 1 repeat. The tract at residues 331-351 (EQRVPCSTSYHSSGLHSSDGV) is disordered. The span at 337-348 (STSYHSSGLHSS) shows a compositional bias: low complexity. 3 RPEL repeats span residues 422–447 (DSLA…PRQT), 460–485 (TKLT…KPRN), and 498–523 (RRLT…IRFS). Residues 462 to 494 (LTRRLSQRPTAEELEQRNILKPRNEQEEQEEKR) are disordered. Serine 467 carries the phosphoserine modification. Over residues 471-494 (TAEELEQRNILKPRNEQEEQEEKR) the composition is skewed to basic and acidic residues. Position 505 is a phosphoserine (serine 505).

It belongs to the phosphatase and actin regulator family. As to quaternary structure, interacts (via RPEL repeats) with ACTA1 and PPP1CA; ACTA1 and PPP1CA compete for the same binding site. In terms of tissue distribution, selectively expressed in brain. High levels are found in the olfactory tubercle, nucleus accumbens core and shell, caudate-putamen, cerebral cortex, hippocampus and piriform cortex. Moderate to high levels in the olfactory bulb, arcuate and ventromedial hypothalamus, subthalamic nucleus, amygdala, lateral septum, habenula and thalamus. Low expression, if any, in substantia nigra pars compacta/pars reticula and globus pallidus (at protein level).

Its subcellular location is the cytoplasm. The protein resides in the synapse. The protein localises to the nucleus. Its function is as follows. Binds actin monomers (G actin) and plays a role in multiple processes including the regulation of actin cytoskeleton dynamics, actin stress fibers formation, cell motility and survival, formation of tubules by endothelial cells, and regulation of PPP1CA activity. Involved in the regulation of cortical neuron migration and dendrite arborization. The protein is Phosphatase and actin regulator 1 (Phactr1) of Rattus norvegicus (Rat).